The primary structure comprises 274 residues: Diaminopimelate epimerase (274 aa).

Substrate-binding residues include Asn11, Gln44, and Asn64. Cys73 functions as the Proton donor in the catalytic mechanism. Substrate-binding positions include Gly74 to Asn75, Asn157, Asn190, and Glu208 to Arg209. The Proton acceptor role is filled by Cys217. Gly218 to Ser219 lines the substrate pocket.

Belongs to the diaminopimelate epimerase family. As to quaternary structure, homodimer.

It localises to the cytoplasm. The enzyme catalyses (2S,6S)-2,6-diaminopimelate = meso-2,6-diaminopimelate. It participates in amino-acid biosynthesis; L-lysine biosynthesis via DAP pathway; DL-2,6-diaminopimelate from LL-2,6-diaminopimelate: step 1/1. In terms of biological role, catalyzes the stereoinversion of LL-2,6-diaminopimelate (L,L-DAP) to meso-diaminopimelate (meso-DAP), a precursor of L-lysine and an essential component of the bacterial peptidoglycan. This is Diaminopimelate epimerase from Actinobacillus pleuropneumoniae serotype 3 (strain JL03).